The sequence spans 823 residues: DNA ligase (823 aa).

Residues 31–35 (DDAFD) and 73–74 (SQ) each bind NAD(+). The active-site N6-AMP-lysine intermediate is the Lys-100. Residues Arg-121, Glu-163, Lys-275, and Lys-296 each contribute to the NAD(+) site. Residues Cys-387, Cys-390, Cys-403, and Cys-408 each contribute to the Zn(2+) site. 3 consecutive BRCT domains span residues 562 to 655 (QAES…TGET), 654 to 742 (ETVH…DAHV), and 741 to 823 (HVHA…TPGT).

The protein belongs to the NAD-dependent DNA ligase family. LigA subfamily. It depends on Mg(2+) as a cofactor. The cofactor is Mn(2+).

The catalysed reaction is NAD(+) + (deoxyribonucleotide)n-3'-hydroxyl + 5'-phospho-(deoxyribonucleotide)m = (deoxyribonucleotide)n+m + AMP + beta-nicotinamide D-nucleotide.. Functionally, DNA ligase that catalyzes the formation of phosphodiester linkages between 5'-phosphoryl and 3'-hydroxyl groups in double-stranded DNA using NAD as a coenzyme and as the energy source for the reaction. It is essential for DNA replication and repair of damaged DNA. The protein is DNA ligase of Treponema pallidum (strain Nichols).